Consider the following 295-residue polypeptide: Bifunctional protein FolD (295 aa).

Residues 166–168 (GRS), Ser-191, and Ile-232 each bind NADP(+).

This sequence belongs to the tetrahydrofolate dehydrogenase/cyclohydrolase family. In terms of assembly, homodimer.

It catalyses the reaction (6R)-5,10-methylene-5,6,7,8-tetrahydrofolate + NADP(+) = (6R)-5,10-methenyltetrahydrofolate + NADPH. It carries out the reaction (6R)-5,10-methenyltetrahydrofolate + H2O = (6R)-10-formyltetrahydrofolate + H(+). The protein operates within one-carbon metabolism; tetrahydrofolate interconversion. Catalyzes the oxidation of 5,10-methylenetetrahydrofolate to 5,10-methenyltetrahydrofolate and then the hydrolysis of 5,10-methenyltetrahydrofolate to 10-formyltetrahydrofolate. The polypeptide is Bifunctional protein FolD (Rhodopseudomonas palustris (strain BisB5)).